The primary structure comprises 195 residues: uncharacterized protein (195 aa).

A disordered region spans residues 143–195; that stretch reads NKLIETINTNRTNNTDNKSTKSKKQTETKKSLRTNKIVKQPINKSKKNIREEY. Residues 148 to 159 show a composition bias toward low complexity; the sequence is TINTNRTNNTDN.

This is an uncharacterized protein from Acanthamoeba polyphaga (Amoeba).